Here is a 513-residue protein sequence, read N- to C-terminus: Bifunctional purine biosynthesis protein PurH (513 aa).

In terms of domain architecture, MGS-like spans 1–145 (MNKRAIISVY…KNFKYTTVIV (145 aa)).

Belongs to the PurH family.

The enzyme catalyses (6R)-10-formyltetrahydrofolate + 5-amino-1-(5-phospho-beta-D-ribosyl)imidazole-4-carboxamide = 5-formamido-1-(5-phospho-D-ribosyl)imidazole-4-carboxamide + (6S)-5,6,7,8-tetrahydrofolate. It carries out the reaction IMP + H2O = 5-formamido-1-(5-phospho-D-ribosyl)imidazole-4-carboxamide. Its pathway is purine metabolism; IMP biosynthesis via de novo pathway; 5-formamido-1-(5-phospho-D-ribosyl)imidazole-4-carboxamide from 5-amino-1-(5-phospho-D-ribosyl)imidazole-4-carboxamide (10-formyl THF route): step 1/1. It participates in purine metabolism; IMP biosynthesis via de novo pathway; IMP from 5-formamido-1-(5-phospho-D-ribosyl)imidazole-4-carboxamide: step 1/1. The chain is Bifunctional purine biosynthesis protein PurH from Caldicellulosiruptor bescii (strain ATCC BAA-1888 / DSM 6725 / KCTC 15123 / Z-1320) (Anaerocellum thermophilum).